Here is a 440-residue protein sequence, read N- to C-terminus: Thymidine phosphorylase (440 aa).

The protein belongs to the thymidine/pyrimidine-nucleoside phosphorylase family. In terms of assembly, homodimer.

The catalysed reaction is thymidine + phosphate = 2-deoxy-alpha-D-ribose 1-phosphate + thymine. It functions in the pathway pyrimidine metabolism; dTMP biosynthesis via salvage pathway; dTMP from thymine: step 1/2. Functionally, the enzymes which catalyze the reversible phosphorolysis of pyrimidine nucleosides are involved in the degradation of these compounds and in their utilization as carbon and energy sources, or in the rescue of pyrimidine bases for nucleotide synthesis. In Salmonella dublin (strain CT_02021853), this protein is Thymidine phosphorylase.